The sequence spans 495 residues: Lysine--tRNA ligase (495 aa).

Positions 406 and 413 each coordinate Mg(2+).

The protein belongs to the class-II aminoacyl-tRNA synthetase family. As to quaternary structure, homodimer. Requires Mg(2+) as cofactor.

It is found in the cytoplasm. The enzyme catalyses tRNA(Lys) + L-lysine + ATP = L-lysyl-tRNA(Lys) + AMP + diphosphate. This is Lysine--tRNA ligase from Staphylococcus aureus (strain COL).